A 274-amino-acid chain; its full sequence is Oxidized low-density lipoprotein receptor 1 (274 aa).

A compositionally biased stretch (basic and acidic residues) spans 1-16; it reads MAVDDLKVKPMKDQPD. The disordered stretch occupies residues 1–25; sequence MAVDDLKVKPMKDQPDQKSNGKKPK. Over 1 to 31 the chain is Cytoplasmic; it reads MAVDDLKVKPMKDQPDQKSNGKKPKGLRFLS. Residues 32-54 traverse the membrane as a helical; Signal-anchor for type II membrane protein segment; it reads SPWWCPAAVALGVLCLGSLMTII. Residues C36 and C46 are each lipidated (S-palmitoyl cysteine). A neck region spans residues 55–150; the sequence is MLGMQLLQVS…SGPCPEDWLW (96 aa). The Extracellular segment spans residues 55-274; the sequence is MLGMQLLQVS…QKKANLLRSE (220 aa). Residues N73 and N139 are each glycosylated (N-linked (GlcNAc...) asparagine). A coiled-coil region spans residues 84–139; that stretch reads QVLAQQQAEAASQESQRELKEMIETLAKRLDEKSKKQMELNHQYLNLQEALKRMDN. 3 cysteine pairs are disulfide-bonded: C144–C155, C172–C264, and C243–C256. The C-type lectin domain maps to 151 to 265; the sequence is HGKNCYLFSS…CILVAYSICQ (115 aa).

Homodimer; disulfide-linked. May form a hexamer composed of 3 homodimers. Interacts with HSP70. N-glycosylated.

It localises to the cell membrane. Its subcellular location is the membrane raft. The protein localises to the secreted. Receptor that mediates the recognition, internalization and degradation of oxidatively modified low density lipoprotein (oxLDL) by vascular endothelial cells. OxLDL is a marker of atherosclerosis that induces vascular endothelial cell activation and dysfunction, resulting in pro-inflammatory responses, pro-oxidative conditions and apoptosis. Its association with oxLDL induces the activation of NF-kappa-B through an increased production of intracellular reactive oxygen and a variety of pro-atherogenic cellular responses including a reduction of nitric oxide (NO) release, monocyte adhesion and apoptosis. In addition to binding oxLDL, it acts as a receptor for the HSP70 protein involved in antigen cross-presentation to naive T-cells in dendritic cells, thereby participating in cell-mediated antigen cross-presentation. Also involved in inflammatory process, by acting as a leukocyte-adhesion molecule at the vascular interface in endotoxin-induced inflammation. Also acts as a receptor for advanced glycation end (AGE) products, activated platelets, monocytes, apoptotic cells and both Gram-negative and Gram-positive bacteria. The sequence is that of Oxidized low-density lipoprotein receptor 1 (OLR1) from Oryctolagus cuniculus (Rabbit).